A 787-amino-acid chain; its full sequence is Integrin beta-6 (787 aa).

Positions 1-21 are cleaved as a signal peptide; that stretch reads MGIELVCLFLLLLGRNDHVQG. One can recognise a PSI domain in the interval 22–71; sequence GCAWSGAETCSDCLLTGPHCAWCSQENFTHLSGAGERCDTPENLLAKGCQ. At 22–708 the chain is on the extracellular side; sequence GCAWSGAETC…KDCPKPPNIP (687 aa). Intrachain disulfides connect C23–C41, C31–C454, C34–C59, C44–C70, C197–C204, C252–C293, C394–C406, C426–C452, C456–C476, C467–C479, C481–C490, C492–C519, C502–C517, C511–C522, C524–C537, C539–C560, C544–C558, C552–C563, and C565–C574. 2 N-linked (GlcNAc...) asparagine glycosylation sites follow: N48 and N97. The 241-residue stretch at 131–371 folds into the VWFA domain; it reads YPVDLYYLMD…QLIISAYEEL (241 aa). The Mg(2+) site is built by D140, S142, and S144. Residues S144, D147, D148, and E179 each coordinate Ca(2+). The Ca(2+) site is built by N235, D237, P239, and E240. A Mg(2+)-binding site is contributed by E240. An N-linked (GlcNAc...) asparagine glycan is attached at N260. Residues D271 and K355 each contribute to the Ca(2+) site. N-linked (GlcNAc...) asparagine glycosylation occurs at N387. N418 carries N-linked (GlcNAc...) asparagine glycosylation. 4 I-EGF domains span residues 456–491, 492–538, 539–575, and 576–615; these read CQRE…PRCE, CGED…PYCQ, CDNF…EYCN, and CTTS…PTCE. 2 N-linked (GlcNAc...) asparagine glycosylation sites follow: N463 and N471. N541 carries an N-linked (GlcNAc...) asparagine glycan. N575 is a glycosylation site (N-linked (GlcNAc...) asparagine). 9 disulfide bridges follow: C576-C599, C583-C597, C591-C602, C604-C614, C617-C620, C624-C669, C630-C649, C633-C645, and C677-C701. Residue N695 is glycosylated (N-linked (GlcNAc...) asparagine). Residues 709–729 traverse the membrane as a helical segment; it reads MIMLGVSLAILLIGVVLLCIW. An interaction with HAX1 region spans residues 730–757; the sequence is KLLVSFHDRKEVAKFEAERSKAKWQTGT. Topologically, residues 730-787 are cytoplasmic; sequence KLLVSFHDRKEVAKFEAERSKAKWQTGTNPLYRGSTSTFKNVTYKHREKHKVGLSSDG.

It belongs to the integrin beta chain family. In terms of assembly, heterodimer of an alpha and a beta subunit. Interacts with FLNB. Interacts with HAX1. ITGAV:ITGB6 interacts with FBN1. ITGAV:ITGB6 interacts with TGFB1.

Its subcellular location is the cell membrane. The protein localises to the cell junction. The protein resides in the focal adhesion. Its function is as follows. Integrin alpha-V:beta-6 (ITGAV:ITGB6) is a receptor for fibronectin and cytotactin. It recognizes the sequence R-G-D in its ligands. ITGAV:ITGB6 acts as a receptor for fibrillin-1 (FBN1) and mediates R-G-D-dependent cell adhesion to FBN1. Integrin alpha-V:beta-6 (ITGAV:ITGB6) mediates R-G-D-dependent release of transforming growth factor beta-1 (TGF-beta-1) from regulatory Latency-associated peptide (LAP), thereby playing a key role in TGF-beta-1 activation. The sequence is that of Integrin beta-6 (Itgb6) from Rattus norvegicus (Rat).